A 676-amino-acid polypeptide reads, in one-letter code: MMQPADIVAQMRQLIQLIAKHNHAYYVMDQPSITDNEYDQLFHQLKALEAEYPELTQADTPTNRVGGQALSKFETVTHAVPMLSLGNVFNQEDLFAFARRIEERLPNQQIQYDVELKLDGLAISLWYENGVLVRGVTRGDGETGEDITQNVKTIRNLPKHLQHHSVETPRFLEVRGEVLMPKQGFERLNAANEAKGEKTFANPRNAAAGSLRQLDPAIAASRPLAFYAYGIAQCEPHHGLGSMHESLQWLTQLGFEIAERQFLCSSIQEVQQCYEQIQQERPDLAVEIDGMVIKVDDLKQQQQLGFLSREPRWATAYKFPAEVAMTTVENIDWQVGRTGTLTPVARLQPVFVGGVTVSNVTLHNIGEIHRLDVRVGDRVSVYRSGDVIPKVEKVWPEFRPELAEIVQLPEQCPVCSSPVVMPEGEALARCSGGLYCAAQRIEAIRHFVSRKALDIEGLGDRWVESLLHLDLLKDVADIYHLHEHREQLLTIEKMGEKSVQNLMDAIEASKKTTLARFIYALGIRGVGETTARMLANTFQTLDALKQADIEALKKTPDVGDITAEWIYDFFLAEHNIEVLDRLLAAGIHWDAPLAPTRQPLNGESWVVTGTLETMGRDEATQRLQALGARVSGSVSSKTKCVVAGEKAGSKLDKAEKLQIRVMNEQEFLAFLAQYSA.

Residues 35–39 (DNEYD), 84–85 (SL), and E115 contribute to the NAD(+) site. K117 acts as the N6-AMP-lysine intermediate in catalysis. Positions 138, 177, 294, and 318 each coordinate NAD(+). Zn(2+) is bound by residues C412, C415, C430, and C436. The BRCT domain maps to 595-676 (PTRQPLNGES…FLAFLAQYSA (82 aa)).

The protein belongs to the NAD-dependent DNA ligase family. LigA subfamily. Mg(2+) serves as cofactor. Requires Mn(2+) as cofactor.

The enzyme catalyses NAD(+) + (deoxyribonucleotide)n-3'-hydroxyl + 5'-phospho-(deoxyribonucleotide)m = (deoxyribonucleotide)n+m + AMP + beta-nicotinamide D-nucleotide.. In terms of biological role, DNA ligase that catalyzes the formation of phosphodiester linkages between 5'-phosphoryl and 3'-hydroxyl groups in double-stranded DNA using NAD as a coenzyme and as the energy source for the reaction. It is essential for DNA replication and repair of damaged DNA. In Acinetobacter baylyi (strain ATCC 33305 / BD413 / ADP1), this protein is DNA ligase.